The sequence spans 805 residues: Leucine--tRNA ligase (805 aa).

The 'HIGH' region motif lies at 41-52 (PYPSGAGLHVGH). The short motif at 577–581 (KMSKS) is the 'KMSKS' region element. An ATP-binding site is contributed by K580.

The protein belongs to the class-I aminoacyl-tRNA synthetase family.

The protein resides in the cytoplasm. It catalyses the reaction tRNA(Leu) + L-leucine + ATP = L-leucyl-tRNA(Leu) + AMP + diphosphate. The protein is Leucine--tRNA ligase of Staphylococcus aureus (strain JH1).